A 349-amino-acid polypeptide reads, in one-letter code: Bifunctional protein FolKE (349 aa).

The tract at residues 1–226 (MQTTYLSMGS…LFEIDSSKTD (226 aa)) is 2-amino-4-hydroxy-6-hydroxymethyldihydropteridine pyrophosphokinase. A GTP cyclohydrolase 1 region spans residues 226 to 349 (DSIVLIKDIP…KRMEFLESLL (124 aa)).

This sequence in the N-terminal section; belongs to the HPPK family. In the C-terminal section; belongs to the GTP cyclohydrolase I family. Homomer.

The catalysed reaction is 6-hydroxymethyl-7,8-dihydropterin + ATP = (7,8-dihydropterin-6-yl)methyl diphosphate + AMP + H(+). It catalyses the reaction GTP + H2O = 7,8-dihydroneopterin 3'-triphosphate + formate + H(+). The protein operates within cofactor biosynthesis; 7,8-dihydroneopterin triphosphate biosynthesis; 7,8-dihydroneopterin triphosphate from GTP: step 1/1. Its pathway is cofactor biosynthesis; tetrahydrofolate biosynthesis; 2-amino-4-hydroxy-6-hydroxymethyl-7,8-dihydropteridine diphosphate from 7,8-dihydroneopterin triphosphate: step 4/4. The polypeptide is Bifunctional protein FolKE (folKE) (Lactococcus lactis subsp. lactis (strain IL1403) (Streptococcus lactis)).